Consider the following 976-residue polypeptide: Probable basic-leucine zipper transcription factor Q (976 aa).

2 coiled-coil regions span residues 57 to 110 (AIDS…QYQQ) and 136 to 287 (QQQQ…QQQQ). The segment at 104–128 (YQQQYQQPYTTPSPPDQIDYNQQLS) is disordered. 2 stretches are compositionally biased toward polar residues: residues 374-385 (TNFNGTNNSTPN) and 393-411 (KLSSNNIKNTATPLSSPPS). The segment at 374–499 (TNFNGTNNST…PIDSNGDFDL (126 aa)) is disordered. Composition is skewed to low complexity over residues 420 to 468 (PKNN…FNNN) and 476 to 490 (STTTPTITSPNMTSP). The bZIP domain maps to 504 to 567 (EKKKSISRIN…GVEVMRPEPE (64 aa)). Positions 505–507 (KKK) are basic motif. The segment at 509-516 (ISRINQNL) is leucine-zipper. Over residues 855–938 (ENQSNNFGNN…VNSNNNNFNN (84 aa)) the composition is skewed to low complexity. The segment at 855 to 957 (ENQSNNFGNN…SADAIPYPST (103 aa)) is disordered.

The protein belongs to the bZIP family.

It localises to the nucleus. Functionally, probable transcriptional regulator. The chain is Probable basic-leucine zipper transcription factor Q (bzpQ) from Dictyostelium discoideum (Social amoeba).